The chain runs to 365 residues: Sulfate/thiosulfate import ATP-binding protein CysA (365 aa).

The 235-residue stretch at 3–237 (IEIANIKKSF…PATRFVLEFM (235 aa)) folds into the ABC transporter domain. 35 to 42 (GPSGSGKT) provides a ligand contact to ATP.

It belongs to the ABC transporter superfamily. Sulfate/tungstate importer (TC 3.A.1.6) family. The complex is composed of two ATP-binding proteins (CysA), two transmembrane proteins (CysT and CysW) and a solute-binding protein (CysP).

Its subcellular location is the cell inner membrane. The enzyme catalyses sulfate(out) + ATP + H2O = sulfate(in) + ADP + phosphate + H(+). It carries out the reaction thiosulfate(out) + ATP + H2O = thiosulfate(in) + ADP + phosphate + H(+). In terms of biological role, part of the ABC transporter complex CysAWTP involved in sulfate/thiosulfate import. Responsible for energy coupling to the transport system. The chain is Sulfate/thiosulfate import ATP-binding protein CysA from Escherichia coli (strain K12).